The following is a 234-amino-acid chain: Octanoyltransferase (234 aa).

In terms of domain architecture, BPL/LPL catalytic spans 50 to 234 (GEAPELVWLL…AFEQVFGPTR (185 aa)). Residues 88–95 (RGGQITYH), 163–165 (AIG), and 176–178 (GIA) contribute to the substrate site. The active-site Acyl-thioester intermediate is the Cys194.

It belongs to the LipB family.

The protein resides in the cytoplasm. The enzyme catalyses octanoyl-[ACP] + L-lysyl-[protein] = N(6)-octanoyl-L-lysyl-[protein] + holo-[ACP] + H(+). The protein operates within protein modification; protein lipoylation via endogenous pathway; protein N(6)-(lipoyl)lysine from octanoyl-[acyl-carrier-protein]: step 1/2. Functionally, catalyzes the transfer of endogenously produced octanoic acid from octanoyl-acyl-carrier-protein onto the lipoyl domains of lipoate-dependent enzymes. Lipoyl-ACP can also act as a substrate although octanoyl-ACP is likely to be the physiological substrate. This Rhodopseudomonas palustris (strain BisA53) protein is Octanoyltransferase.